Here is a 744-residue protein sequence, read N- to C-terminus: Serine/threonine-protein kinase GM11705 (744 aa).

Residues Val17–Ser35 show a composition bias toward polar residues. Disordered stretches follow at residues Val17–Asn38 and Asn54–Glu78. Doublecortin domains are found at residues Leu154–Asn240 and Arg309–Phe392. Residues Tyr473–Thr731 form the Protein kinase domain. Residues Ile479–Val487 and Lys502 contribute to the ATP site. Residue Asp594 is the Proton acceptor of the active site.

It belongs to the protein kinase superfamily. CAMK Ser/Thr protein kinase family. CaMK subfamily.

The enzyme catalyses L-seryl-[protein] + ATP = O-phospho-L-seryl-[protein] + ADP + H(+). It carries out the reaction L-threonyl-[protein] + ATP = O-phospho-L-threonyl-[protein] + ADP + H(+). The protein is Serine/threonine-protein kinase GM11705 of Drosophila sechellia (Fruit fly).